Here is a 1126-residue protein sequence, read N- to C-terminus: Carbamoyl phosphate synthase large chain (1126 aa).

Residues 1 to 402 (MPKRTDIKSV…SLGKAMRSID (402 aa)) form a carboxyphosphate synthetic domain region. ATP contacts are provided by Arg-129, Arg-169, Gly-175, Gly-176, Glu-208, Ile-210, Glu-215, Gly-241, Val-242, His-243, Gln-285, and Glu-299. One can recognise an ATP-grasp 1 domain in the interval 133–328 (KKVVEEAGAE…IAKIATKLAL (196 aa)). Mg(2+) is bound by residues Gln-285, Glu-299, and Asn-301. The Mn(2+) site is built by Gln-285, Glu-299, and Asn-301. The oligomerization domain stretch occupies residues 403-551 (KRHMGFNWDG…YYYSCYADET (149 aa)). The tract at residues 552 to 962 (ELRPRDREAV…AFAKSQLAAY (411 aa)) is carbamoyl phosphate synthetic domain. The region spanning 681-881 (GEVLKKADMN…LAKAAARIMV (201 aa)) is the ATP-grasp 2 domain. The ATP site is built by Arg-717, Lys-765, Leu-767, Glu-772, Gly-797, Val-798, His-799, Ser-800, Gln-840, and Glu-852. Positions 840, 852, and 854 each coordinate Mg(2+). Gln-840, Glu-852, and Asn-854 together coordinate Mn(2+). Positions 963–1126 (EGGLPTSGNV…TQLFELESRD (164 aa)) are allosteric domain. Residues 964–1126 (GGLPTSGNVF…TQLFELESRD (163 aa)) form the MGS-like domain.

It belongs to the CarB family. Composed of two chains; the small (or glutamine) chain promotes the hydrolysis of glutamine to ammonia, which is used by the large (or ammonia) chain to synthesize carbamoyl phosphate. Tetramer of heterodimers (alpha,beta)4. It depends on Mg(2+) as a cofactor. Mn(2+) serves as cofactor.

The enzyme catalyses hydrogencarbonate + L-glutamine + 2 ATP + H2O = carbamoyl phosphate + L-glutamate + 2 ADP + phosphate + 2 H(+). It catalyses the reaction hydrogencarbonate + NH4(+) + 2 ATP = carbamoyl phosphate + 2 ADP + phosphate + 2 H(+). The protein operates within amino-acid biosynthesis; L-arginine biosynthesis; carbamoyl phosphate from bicarbonate: step 1/1. Its pathway is pyrimidine metabolism; UMP biosynthesis via de novo pathway; (S)-dihydroorotate from bicarbonate: step 1/3. In terms of biological role, large subunit of the glutamine-dependent carbamoyl phosphate synthetase (CPSase). CPSase catalyzes the formation of carbamoyl phosphate from the ammonia moiety of glutamine, carbonate, and phosphate donated by ATP, constituting the first step of 2 biosynthetic pathways, one leading to arginine and/or urea and the other to pyrimidine nucleotides. The large subunit (synthetase) binds the substrates ammonia (free or transferred from glutamine from the small subunit), hydrogencarbonate and ATP and carries out an ATP-coupled ligase reaction, activating hydrogencarbonate by forming carboxy phosphate which reacts with ammonia to form carbamoyl phosphate. This chain is Carbamoyl phosphate synthase large chain, found in Bifidobacterium adolescentis (strain ATCC 15703 / DSM 20083 / NCTC 11814 / E194a).